The chain runs to 460 residues: uncharacterized protein (460 aa).

Residues Pro6–Asn64 enclose the TRAM domain. Cys77, Cys83, Cys86, and Cys163 together coordinate [4Fe-4S] cluster. The S-adenosyl-L-methionine site is built by Gln287, Tyr316, Glu337, and Asp385. Residue Cys412 is the Nucleophile of the active site.

It belongs to the class I-like SAM-binding methyltransferase superfamily. RNA M5U methyltransferase family.

This is an uncharacterized protein from Clostridium tetani (strain Massachusetts / E88).